Here is a 299-residue protein sequence, read N- to C-terminus: MYSSIVPSSSNGYYHQSQYQNAHHQHHQQHYHQQSHHHYNGAAAAPVINVHNYHFHTGPVNNQVIEQHYNHHNHVQQTFEENIPQGPHSSFNFSHDFPQQNNSETHLNHMEPSMTPMEHQNSGSSTPYPFEAKLFVPSPAASVSSYSFSSDLSGKDEEDPRIPLKDRGRVYHPQSTEKPKKVPSKRRDKATLDRLRVHKCFYQGCGKVYTKSSHLTAHERVHSGEKPYPCEWPGCSWRFARSDELTRHYRKHTGAKPFACKECSRKFSRSDHLQLHMKRHETDEQDDGMDDFKDFMTFI.

2 disordered regions span residues 19-38 and 146-189; these read YQNAHHQHHQQHYHQQSHHH and YSFS…RRDK. Residues 23–38 are compositionally biased toward basic residues; sequence HHQHHQQHYHQQSHHH. The segment covering 153–180 has biased composition (basic and acidic residues); it reads SGKDEEDPRIPLKDRGRVYHPQSTEKPK. 3 consecutive C2H2-type zinc fingers follow at residues 198–222, 228–252, and 258–280; these read HKCFYQGCGKVYTKSSHLTAHERVH, YPCEWPGCSWRFARSDELTRHYRKH, and FACKECSRKFSRSDHLQLHMKRH.

The protein belongs to the krueppel C2H2-type zinc-finger protein family. In terms of tissue distribution, expressed predominantly in intestine.

It localises to the nucleus. In terms of biological role, probable transcription factor which regulates lipid metabolism. This chain is Kruppel-like factor 2, found in Caenorhabditis elegans.